We begin with the raw amino-acid sequence, 406 residues long: Homocysteine-responsive endoplasmic reticulum-resident ubiquitin-like domain member 2 protein (406 aa).

Residues 10-89 (VTLIIKAPNQ…HMVHLVCTSR (80 aa)) form the Ubiquitin-like domain. Residues 86–154 (CTSRTPPSSP…TLPQAQTDQA (69 aa)) are disordered. Low complexity-rich tracts occupy residues 87 to 98 (TSRTPPSSPKSS) and 106 to 126 (ALAS…PSSG). Over residues 127 to 154 (QETLSLAVGSSSEGLRQRTLPQAQTDQA) the composition is skewed to polar residues. The helical transmembrane segment at 302–322 (FIMVMGAMLLVYLHQAGWFPF) threads the bilayer.

It localises to the membrane. Its function is as follows. Could be involved in the unfolded protein response (UPR) pathway. The sequence is that of Homocysteine-responsive endoplasmic reticulum-resident ubiquitin-like domain member 2 protein (HERPUD2) from Homo sapiens (Human).